The chain runs to 218 residues: 7-cyano-7-deazaguanine synthase (218 aa).

Position 9-19 (9-19 (FSGGMDSFTVL)) interacts with ATP. The Zn(2+) site is built by cysteine 185, cysteine 193, cysteine 196, and cysteine 199.

This sequence belongs to the QueC family. It depends on Zn(2+) as a cofactor.

It catalyses the reaction 7-carboxy-7-deazaguanine + NH4(+) + ATP = 7-cyano-7-deazaguanine + ADP + phosphate + H2O + H(+). The protein operates within purine metabolism; 7-cyano-7-deazaguanine biosynthesis. Its function is as follows. Catalyzes the ATP-dependent conversion of 7-carboxy-7-deazaguanine (CDG) to 7-cyano-7-deazaguanine (preQ(0)). In Pseudoalteromonas atlantica (strain T6c / ATCC BAA-1087), this protein is 7-cyano-7-deazaguanine synthase.